The following is a 72-amino-acid chain: MAKEDVIEFSGTVTELLPNAMFRVKLDNDHEILAHTSGKMRKNRIRVLAGDRVNVEMTPYDLTKGRITFRYK.

The S1-like domain maps to 1–72; that stretch reads MAKEDVIEFS…TKGRITFRYK (72 aa).

The protein belongs to the IF-1 family. As to quaternary structure, component of the 30S ribosomal translation pre-initiation complex which assembles on the 30S ribosome in the order IF-2 and IF-3, IF-1 and N-formylmethionyl-tRNA(fMet); mRNA recruitment can occur at any time during PIC assembly.

Its subcellular location is the cytoplasm. In terms of biological role, one of the essential components for the initiation of protein synthesis. Stabilizes the binding of IF-2 and IF-3 on the 30S subunit to which N-formylmethionyl-tRNA(fMet) subsequently binds. Helps modulate mRNA selection, yielding the 30S pre-initiation complex (PIC). Upon addition of the 50S ribosomal subunit IF-1, IF-2 and IF-3 are released leaving the mature 70S translation initiation complex. This Paramagnetospirillum magneticum (strain ATCC 700264 / AMB-1) (Magnetospirillum magneticum) protein is Translation initiation factor IF-1.